An 88-amino-acid polypeptide reads, in one-letter code: Small ribosomal subunit protein uS15 (88 aa).

The protein belongs to the universal ribosomal protein uS15 family. Part of the 30S ribosomal subunit. Forms a bridge to the 50S subunit in the 70S ribosome, contacting the 23S rRNA.

Functionally, one of the primary rRNA binding proteins, it binds directly to 16S rRNA where it helps nucleate assembly of the platform of the 30S subunit by binding and bridging several RNA helices of the 16S rRNA. Its function is as follows. Forms an intersubunit bridge (bridge B4) with the 23S rRNA of the 50S subunit in the ribosome. In Mesomycoplasma flocculare (Mycoplasma flocculare), this protein is Small ribosomal subunit protein uS15.